The chain runs to 319 residues: ATP-dependent 6-phosphofructokinase (319 aa).

Position 11 (glycine 11) interacts with ATP. Residue arginine 21 to arginine 25 participates in ADP binding. Residues arginine 72–cysteine 73 and glycine 102–serine 105 contribute to the ATP site. Residue aspartate 103 participates in Mg(2+) binding. A substrate-binding site is contributed by threonine 125–aspartate 127. The active-site Proton acceptor is aspartate 127. ADP is bound at residue arginine 154. Substrate is bound by residues arginine 162 and methionine 169–arginine 171. ADP contacts are provided by residues glycine 185 to glutamate 187, arginine 211, and lysine 213 to histidine 215. Substrate contacts are provided by residues glutamate 222, arginine 243, and histidine 249–arginine 252.

It belongs to the phosphofructokinase type A (PFKA) family. ATP-dependent PFK group I subfamily. Prokaryotic clade 'B1' sub-subfamily. In terms of assembly, homotetramer. Mg(2+) serves as cofactor.

The protein localises to the cytoplasm. It carries out the reaction beta-D-fructose 6-phosphate + ATP = beta-D-fructose 1,6-bisphosphate + ADP + H(+). Its pathway is carbohydrate degradation; glycolysis; D-glyceraldehyde 3-phosphate and glycerone phosphate from D-glucose: step 3/4. Allosterically activated by ADP and other diphosphonucleosides, and allosterically inhibited by phosphoenolpyruvate. Catalyzes the phosphorylation of D-fructose 6-phosphate to fructose 1,6-bisphosphate by ATP, the first committing step of glycolysis. This is ATP-dependent 6-phosphofructokinase from Bacillus velezensis (strain DSM 23117 / BGSC 10A6 / LMG 26770 / FZB42) (Bacillus amyloliquefaciens subsp. plantarum).